The chain runs to 397 residues: GPI mannosyltransferase 1 (397 aa).

The next 9 membrane-spanning stretches (helical) occupy residues 5 to 25 (ECLLVLAGLLARVGFFSYGIY), 79 to 99 (WVHFGKFIFVLFDLLAGVMVM), 111 to 128 (LILASLWLLNPVVITVST), 156 to 176 (GFVYGVAIHFKIYPIIYALPI), 193 to 213 (LTMGIATLATLVGCGIGMYYI), 257 to 277 (WAEFAFLPQLFICAAVTYVLW), 307 to 327 (YFIWYLLFLPSFLLDTTLSGA), 330 to 350 (IFLIFLWVGTQAWWLYNGYLL), and 362 to 382 (LFSACVTFFLANVYLLAQFIL).

This sequence belongs to the PIGM family.

It is found in the endoplasmic reticulum membrane. Its pathway is glycolipid biosynthesis; glycosylphosphatidylinositol-anchor biosynthesis. Its function is as follows. Mannosyltransferase involved in glycosylphosphatidylinositol-anchor biosynthesis. Transfers the first alpha-1,4-mannose to GlcN-acyl-PI during GPI precursor assembly. Required for cell wall integrity. The protein is GPI mannosyltransferase 1 (GPI14) of Eremothecium gossypii (strain ATCC 10895 / CBS 109.51 / FGSC 9923 / NRRL Y-1056) (Yeast).